A 344-amino-acid polypeptide reads, in one-letter code: Phenylalanine--tRNA ligase alpha subunit (344 aa).

Glu256 is a Mg(2+) binding site.

It belongs to the class-II aminoacyl-tRNA synthetase family. Phe-tRNA synthetase alpha subunit type 1 subfamily. In terms of assembly, tetramer of two alpha and two beta subunits. The cofactor is Mg(2+).

Its subcellular location is the cytoplasm. The catalysed reaction is tRNA(Phe) + L-phenylalanine + ATP = L-phenylalanyl-tRNA(Phe) + AMP + diphosphate + H(+). This chain is Phenylalanine--tRNA ligase alpha subunit, found in Bacillus cereus (strain G9842).